Consider the following 399-residue polypeptide: Acetate kinase (399 aa).

N9 contacts Mg(2+). K16 contributes to the ATP binding site. R90 lines the substrate pocket. D147 functions as the Proton donor/acceptor in the catalytic mechanism. ATP-binding positions include 207-211 (HLGNG), 281-283 (DFR), and 333-337 (GVGEN). E387 is a Mg(2+) binding site.

The protein belongs to the acetokinase family. In terms of assembly, homodimer. Mg(2+) is required as a cofactor. Requires Mn(2+) as cofactor.

It localises to the cytoplasm. It catalyses the reaction acetate + ATP = acetyl phosphate + ADP. It functions in the pathway metabolic intermediate biosynthesis; acetyl-CoA biosynthesis; acetyl-CoA from acetate: step 1/2. Catalyzes the formation of acetyl phosphate from acetate and ATP. Can also catalyze the reverse reaction. This is Acetate kinase from Mycobacterium sp. (strain KMS).